Consider the following 522-residue polypeptide: Golgin subfamily A member 6-like protein 10 (522 aa).

Over residues 1 to 11 (MWPQPRLPPHP) the composition is skewed to pro residues. Residues 1-77 (MWPQPRLPPH…DSATGIYGEG (77 aa)) form a disordered region. A compositionally biased stretch (polar residues) spans 51-62 (NGSSPDTATSGG). Positions 157–328 (SKVEQLQDET…RLCEQEKLPG (172 aa)) form a coiled coil. The span at 439–452 (KELEKSGGAEEPRG) shows a compositional bias: basic and acidic residues. The disordered stretch occupies residues 439-503 (KELEKSGGAE…TGEAAGGAEE (65 aa)). Composition is skewed to low complexity over residues 456-471 (AAAA…PQGA) and 489-503 (GEAV…GAEE).

It belongs to the GOLGA6 family.

The sequence is that of Golgin subfamily A member 6-like protein 10 from Homo sapiens (Human).